The sequence spans 372 residues: Glutamate 5-kinase (372 aa).

Position 14 (K14) interacts with ATP. 3 residues coordinate substrate: S54, D141, and N153. Residues 173–174 (TD) and 215–221 (SGGMLTK) contribute to the ATP site. Residues 280-358 (AGKVVVDEGA…HEIEHILGYI (79 aa)) form the PUA domain.

It belongs to the glutamate 5-kinase family.

It is found in the cytoplasm. The catalysed reaction is L-glutamate + ATP = L-glutamyl 5-phosphate + ADP. It functions in the pathway amino-acid biosynthesis; L-proline biosynthesis; L-glutamate 5-semialdehyde from L-glutamate: step 1/2. Its function is as follows. Catalyzes the transfer of a phosphate group to glutamate to form L-glutamate 5-phosphate. This is Glutamate 5-kinase from Methylobacillus flagellatus (strain ATCC 51484 / DSM 6875 / VKM B-1610 / KT).